We begin with the raw amino-acid sequence, 150 residues long: MSHLDPTLLVLLVLAALGIISHNMTVTLAMLLLLVIRITPLNHFFPWVEKYGLTIGVLILTVGVMAPIASGKITVQAVLNSFMNWKSLLAIVIGVLVSWLGSRGVSLMSNQPSTVAGLLVGTVLGVALFKGVPVGPLIAAGILSLLIGKS.

Transmembrane regions (helical) follow at residues 8-28 (LLVLLVLAALGIISHNMTVTL), 51-71 (YGLTIGVLILTVGVMAPIASG), 88-108 (LLAIVIGVLVSWLGSRGVSLM), and 123-143 (VLGVALFKGVPVGPLIAAGIL).

Belongs to the UPF0756 family.

It is found in the cell membrane. In Photorhabdus laumondii subsp. laumondii (strain DSM 15139 / CIP 105565 / TT01) (Photorhabdus luminescens subsp. laumondii), this protein is UPF0756 membrane protein plu2726.